A 398-amino-acid chain; its full sequence is Type II secretion system protein L (398 aa).

Residues Met1 to Pro248 are Cytoplasmic-facing. Residues Val249–Leu265 traverse the membrane as a helical segment. At His266 to Ala398 the chain is on the periplasmic side.

This sequence belongs to the GSP L family. Type II secretion system is composed of four main components: the outer membrane complex, the inner membrane complex, the cytoplasmic secretion ATPase and the periplasm-spanning pseudopilus. Forms homodimers. Interacts with PulM/GspM. Interacts with PulE/GspE and PulF/GspF.

Its subcellular location is the cell inner membrane. Its function is as follows. Inner membrane component of the type II secretion system required for the energy-dependent secretion of extracellular factors such as proteases and toxins from the periplasm. Plays a role in the complex assembly and recruits PulM resulting in a stable complex in the inner membrane. Provides thus a link between the energy-providing PulE protein in the cytoplasm and the rest of the T2SS machinery. This Klebsiella pneumoniae protein is Type II secretion system protein L (pulL).